Here is a 120-residue protein sequence, read N- to C-terminus: NADH dehydrogenase [ubiquinone] 1 subunit C2 (120 aa).

Residues 57–76 (GLHRQLLFVTSFVFAGYFYL) form a helical membrane-spanning segment.

Belongs to the complex I NDUFC2 subunit family. In terms of assembly, complex I is composed of 45 different subunits. Interacts with TMEM242.

The protein resides in the mitochondrion inner membrane. Accessory subunit of the mitochondrial membrane respiratory chain NADH dehydrogenase (Complex I), that is believed not to be involved in catalysis but required for the complex assembly. Complex I functions in the transfer of electrons from NADH to the respiratory chain. The immediate electron acceptor for the enzyme is believed to be ubiquinone. This chain is NADH dehydrogenase [ubiquinone] 1 subunit C2, found in Mus musculus (Mouse).